Consider the following 158-residue polypeptide: 2-C-methyl-D-erythritol 2,4-cyclodiphosphate synthase (158 aa).

Residues Asp8 and His10 each coordinate a divalent metal cation. 4-CDP-2-C-methyl-D-erythritol 2-phosphate is bound by residues 8–10 (DAH) and 34–35 (HS). An a divalent metal cation-binding site is contributed by His42. Residues 56 to 58 (DIG), 132 to 135 (TTTE), and Arg142 contribute to the 4-CDP-2-C-methyl-D-erythritol 2-phosphate site.

It belongs to the IspF family. Homotrimer. The cofactor is a divalent metal cation.

It catalyses the reaction 4-CDP-2-C-methyl-D-erythritol 2-phosphate = 2-C-methyl-D-erythritol 2,4-cyclic diphosphate + CMP. The protein operates within isoprenoid biosynthesis; isopentenyl diphosphate biosynthesis via DXP pathway; isopentenyl diphosphate from 1-deoxy-D-xylulose 5-phosphate: step 4/6. Its function is as follows. Involved in the biosynthesis of isopentenyl diphosphate (IPP) and dimethylallyl diphosphate (DMAPP), two major building blocks of isoprenoid compounds. Catalyzes the conversion of 4-diphosphocytidyl-2-C-methyl-D-erythritol 2-phosphate (CDP-ME2P) to 2-C-methyl-D-erythritol 2,4-cyclodiphosphate (ME-CPP) with a corresponding release of cytidine 5-monophosphate (CMP). In Nitrosococcus oceani (strain ATCC 19707 / BCRC 17464 / JCM 30415 / NCIMB 11848 / C-107), this protein is 2-C-methyl-D-erythritol 2,4-cyclodiphosphate synthase.